A 342-amino-acid polypeptide reads, in one-letter code: Muscleblind-like protein 3 (342 aa).

C3H1-type zinc fingers lie at residues 14–42 (WLTL…HPPR), 48–74 (NGRV…HPPP), 174–202 (TDRL…HPTD), and 210–236 (DNSV…HPPP). The span at 316 to 326 (PSTVSTATPPA) shows a compositional bias: low complexity. A disordered region spans residues 316-342 (PSTVSTATPPASNVPYVPTTTGNQLKY). Residues 333–342 (PTTTGNQLKY) show a composition bias toward polar residues.

It belongs to the muscleblind family.

It localises to the nucleus. The protein localises to the cytoplasm. In terms of biological role, mediates pre-mRNA alternative splicing regulation. Acts either as activator or repressor of splicing on specific pre-mRNA targets. Inhibits cardiac troponin-T (TNNT2) pre-mRNA exon inclusion but induces insulin receptor (IR) pre-mRNA exon inclusion in muscle. Antagonizes the alternative splicing activity pattern of CELF proteins. Could inhibit terminal muscle differentiation, acting at approximately the time of myogenin induction. The chain is Muscleblind-like protein 3 (Mbnl3) from Mus musculus (Mouse).